The following is a 438-amino-acid chain: GRAS family protein TF80 (438 aa).

Residues 13–436 form the GRAS domain; it reads LRYDSHGSNP…RPLFSVSAWK (424 aa). The leucine repeat I (LRI) stretch occupies residues 20 to 81; sequence SNPMIPLIEC…YKIVKHLPGV (62 aa). The segment at 100 to 165 is VHIID; it reads QKYFYDLCPF…GGPPFLKITG (66 aa). The VHIID signature appears at 131-135; the sequence is VHIID. The tract at residues 175–207 is leucine repeat II (LRII); the sequence is QMSFHLTTEAGILDFPLQFNPIISKLEDVDFEN. The PFYRE stretch occupies residues 216–359; sequence VAISSVLQLH…SMLLGEQIKN (144 aa). The LXXLL motif signature appears at 224-228; it reads LHSLL. Positions 362–436 are SAW; that stretch reads TCEGVDRKER…RPLFSVSAWK (75 aa).

The protein belongs to the GRAS family. Interacts with RAM1.

The protein localises to the nucleus. In Medicago truncatula (Barrel medic), this protein is GRAS family protein TF80 (TF80).